Consider the following 20-residue polypeptide: GVIAWELQHNEPGRKDSTAG.

Residues 1-20 (GVIAWELQHNEPGRKDSTAG) form a disordered region. Over residues 8–20 (QHNEPGRKDSTAG) the composition is skewed to basic and acidic residues.

This peptide stimulates the transport of dentinal fluid, which is important for the prevention of dental caries. This chain is Dentinal fluid transport-stimulating peptide, found in Rattus norvegicus (Rat).